A 65-amino-acid chain; its full sequence is Vespid chemotactic peptide 5h (65 aa).

The first 23 residues, 1 to 23 (MKYNIVFLFAIIASLACLQLTFA), serve as a signal peptide directing secretion. AXPX repeat units follow at residues 23–26 (AAPA), 27–30 (ASPL), 31–34 (ANPG), 35–38 (ASPD), 39–42 (AAPN), 43–46 (ADPL), and 47–50 (ADPF). The propeptide occupies 24–49 (APAASPLANPGASPDAAPNADPLADP). Leucine 62 carries the post-translational modification Leucine amide.

It belongs to the MCD family. Crabrolin subfamily. In terms of tissue distribution, expressed by the venom gland.

It localises to the secreted. Shows antimicrobial activity against the Gram-negative bacteria E.coli ATCC 25922 (MIC=30 ug/ml), the Gram-positive bacteria S.aureus ATCC 2592 (MIC=5 ug/ml) and the fungus C.albicans ATCC 2002 (MIC=25 ug/ml). Acts as a mast cell degranulating peptide. Its mast cell degranulation activity may be related to the activation of G-protein coupled receptors in mast cells as well as interaction with other proteins located in cell endosomal membranes in the mast cells. Induces the chemotaxis of neutrophils. This chain is Vespid chemotactic peptide 5h, found in Vespa magnifica (Hornet).